The following is a 416-amino-acid chain: CinA-like protein (416 aa).

This sequence belongs to the CinA family.

The protein is CinA-like protein of Thermosynechococcus vestitus (strain NIES-2133 / IAM M-273 / BP-1).